A 99-amino-acid chain; its full sequence is DNA-binding protein Fis (99 aa).

The interval Met1–Gln25 is disordered. Positions Gln75–Lys94 form a DNA-binding region, H-T-H motif.

The protein belongs to the transcriptional regulatory Fis family. In terms of assembly, homodimer.

In terms of biological role, activates ribosomal RNA transcription. Plays a direct role in upstream activation of rRNA promoters. The chain is DNA-binding protein Fis from Psychromonas ingrahamii (strain DSM 17664 / CCUG 51855 / 37).